A 178-amino-acid polypeptide reads, in one-letter code: MKFLLNSIPTISFFIFYKFYDIFIASFSLMIASLFTFIITSILFNSINKHDLINLIFVIVFGFLTLFYHNSSYIKWKVTIIYFLISIVFLINYLFIKNNLLNIIFKNTIQLSKNVWRKLSLFWSIFFLICAVSNTYIILYFSEQTWVTFKIFGLTILTLIAVIINGFYIYFLKSKIIQ.

The next 5 membrane-spanning stretches (helical) occupy residues 22–42 (IFIASFSLMIASLFTFIITSI), 52–72 (LINLIFVIVFGFLTLFYHNSS), 76–96 (WKVTIIYFLISIVFLINYLFI), 121–141 (LFWSIFFLICAVSNTYIILYF), and 151–171 (IFGLTILTLIAVIINGFYIYF).

This sequence belongs to the YciB family.

The protein localises to the cell membrane. Plays a role in cell envelope biogenesis, maintenance of cell envelope integrity and membrane homeostasis. This Buchnera aphidicola subsp. Baizongia pistaciae (strain Bp) protein is Membrane-spanning protein YciB.